Reading from the N-terminus, the 157-residue chain is 2-C-methyl-D-erythritol 2,4-cyclodiphosphate synthase (157 aa).

Aspartate 8 and histidine 10 together coordinate a divalent metal cation. 4-CDP-2-C-methyl-D-erythritol 2-phosphate contacts are provided by residues 8-10 and 34-35; these read DVH and HS. Histidine 42 lines the a divalent metal cation pocket. Residues 56-58, 61-65, 132-135, phenylalanine 139, and arginine 142 contribute to the 4-CDP-2-C-methyl-D-erythritol 2-phosphate site; these read DIG, FPDTD, and TTTE.

Belongs to the IspF family. As to quaternary structure, homotrimer. A divalent metal cation serves as cofactor.

It catalyses the reaction 4-CDP-2-C-methyl-D-erythritol 2-phosphate = 2-C-methyl-D-erythritol 2,4-cyclic diphosphate + CMP. The protein operates within isoprenoid biosynthesis; isopentenyl diphosphate biosynthesis via DXP pathway; isopentenyl diphosphate from 1-deoxy-D-xylulose 5-phosphate: step 4/6. Involved in the biosynthesis of isopentenyl diphosphate (IPP) and dimethylallyl diphosphate (DMAPP), two major building blocks of isoprenoid compounds. Catalyzes the conversion of 4-diphosphocytidyl-2-C-methyl-D-erythritol 2-phosphate (CDP-ME2P) to 2-C-methyl-D-erythritol 2,4-cyclodiphosphate (ME-CPP) with a corresponding release of cytidine 5-monophosphate (CMP). The chain is 2-C-methyl-D-erythritol 2,4-cyclodiphosphate synthase from Geobacter metallireducens (strain ATCC 53774 / DSM 7210 / GS-15).